Reading from the N-terminus, the 836-residue chain is Enhancer of polycomb homolog 1 (836 aa).

A Glycyl lysine isopeptide (Lys-Gly) (interchain with G-Cter in SUMO2) cross-link involves residue Lys-319. Disordered regions lie at residues Lys-335–Ala-360 and Tyr-372–Pro-401. Over residues Pro-346 to Ala-360 the composition is skewed to low complexity. The residue at position 539 (Ser-539) is a Phosphoserine. A Glycyl lysine isopeptide (Lys-Gly) (interchain with G-Cter in SUMO2) cross-link involves residue Lys-673. The disordered stretch occupies residues Val-802 to Asn-829. The segment covering Val-811 to Lys-820 has biased composition (basic and acidic residues).

The protein belongs to the enhancer of polycomb family. In terms of assembly, component of the NuA4 histone acetyltransferase complex which contains the catalytic subunit KAT5/TIP60 and the subunits EP400, TRRAP/PAF400, BRD8/SMAP, EPC1, DMAP1/DNMAP1, RUVBL1/TIP49, RUVBL2, ING3, actin, ACTL6A/BAF53A, MORF4L1/MRG15, MORF4L2/MRGX, MRGBP, YEATS4/GAS41, VPS72/YL1 and MEAF6. KAT5/TIP60, EPC1, and ING3 together constitute a minimal HAT complex termed Piccolo NuA4. Component of a NuA4-related complex which contains EP400, TRRAP/PAF400, SRCAP, BRD8/SMAP, EPC1, DMAP1/DNMAP1, RUVBL1/TIP49, RUVBL2, actin, ACTL6A/BAF53A, VPS72 and YEATS4/GAS41. Interacts with TRIM27. Interacts with MBTD1; interaction is direct and promotes recruitment of MBTD1 into the NuA4 histone acetyltransferase complex.

It localises to the nucleus. The protein resides in the cytoplasm. Functionally, component of the NuA4 histone acetyltransferase (HAT) complex, a multiprotein complex involved in transcriptional activation of select genes principally by acetylation of nucleosomal histones H4 and H2A. The NuA4 complex plays a direct role in repair of DNA double-strand breaks (DSBs) by promoting homologous recombination (HR). The NuA4 complex is also required for spermatid development by promoting acetylation of histones: histone acetylation is required for histone replacement during the transition from round to elongating spermatids. In the NuA4 complex, EPC1 is required to recruit MBTD1 into the complex. This chain is Enhancer of polycomb homolog 1, found in Homo sapiens (Human).